The following is a 103-amino-acid chain: MQGVWSQLWRKYADYKYNKFERFAVWEMIEPYRRPKTFTTLITIYVAAFYTGVIGAAVTEQLYKEKFWEEHPGKTVPLMKPVFYRGPWRVYRGEAIASDASSQ.

A helical membrane pass occupies residues 38-58; that stretch reads FTTLITIYVAAFYTGVIGAAV.

The protein resides in the membrane. This is an uncharacterized protein from Arabidopsis thaliana (Mouse-ear cress).